A 245-amino-acid chain; its full sequence is 8-amino-3,8-dideoxy-manno-octulosonate cytidylyltransferase (245 aa).

This sequence belongs to the KdsB family.

It is found in the cytoplasm. It catalyses the reaction 8-amino-3,8-dideoxy-alpha-D-manno-octulosonate + CTP = CMP-8-amino-3,8-dideoxy-alpha-D-manno-oct-2-ulosonate + diphosphate. It participates in bacterial outer membrane biogenesis; lipopolysaccharide biosynthesis. Its function is as follows. Activates KDO8N (a required 8-carbon sugar) for incorporation into bacterial lipopolysaccharide in the Shewanella genus. The polypeptide is 8-amino-3,8-dideoxy-manno-octulosonate cytidylyltransferase (Shewanella woodyi (strain ATCC 51908 / MS32)).